The following is a 61-amino-acid chain: uncharacterized protein (61 aa).

Residues 10–27 (RILFFFFIFFTLFLFNIP) form a helical membrane-spanning segment.

The protein resides in the membrane. This is an uncharacterized protein from Dictyostelium discoideum (Social amoeba).